The chain runs to 129 residues: Protein RfbJ (129 aa).

It belongs to the glycosyltransferase 2 family.

The protein operates within bacterial outer membrane biogenesis; lipopolysaccharide biosynthesis. In Shigella flexneri, this protein is Protein RfbJ (rfbJ).